A 308-amino-acid chain; its full sequence is Ribonuclease HIII (308 aa).

The RNase H type-2 domain occupies 91 to 308 (KNVIGSDEVG…TEKALKMVKK (218 aa)). A divalent metal cation-binding residues include Asp-97, Glu-98, and Asp-202.

The protein belongs to the RNase HII family. RnhC subfamily. Requires Mn(2+) as cofactor. Mg(2+) serves as cofactor.

The protein localises to the cytoplasm. The catalysed reaction is Endonucleolytic cleavage to 5'-phosphomonoester.. Its function is as follows. Endonuclease that specifically degrades the RNA of RNA-DNA hybrids. The chain is Ribonuclease HIII from Listeria monocytogenes serotype 4b (strain F2365).